A 391-amino-acid chain; its full sequence is Ectodysplasin-A (391 aa).

The Cytoplasmic segment spans residues 1 to 41 (MGYPEVERRELLPAAAPRERGSQGCGCGGAPARAGEGNSCL). A helical; Signal-anchor for type II membrane protein membrane pass occupies residues 42 to 62 (LFLGFFGLSLALHLLTLCCYL). At 63-391 (ELRSELRRER…AIRLGEAPAS (329 aa)) the chain is on the extracellular side. 2 disordered regions span residues 73-127 (GAES…HSDS) and 146-245 (YSEE…GTRE). The segment covering 86-101 (TSGTLSSLGGLDPDSP) has biased composition (low complexity). The span at 102 to 113 (ITSHLGQPSPKQ) shows a compositional bias: polar residues. A Collagen-like domain is found at 180-229 (GPPGPNGPPGPPGPPGPQGPPGIPGIPGIPGTTVMGPPGPPGPPGPQGPP). Pro residues-rich tracts occupy residues 181-203 (PPGP…PGIP) and 216-228 (PPGP…PQGP). Positions 249 to 385 (AVVHLQGQGS…HTTFFGAIRL (137 aa)) constitute a THD domain. N-linked (GlcNAc...) asparagine glycosylation occurs at N313. An intrachain disulfide couples C332 to C346. A glycan (N-linked (GlcNAc...) asparagine) is linked at N372.

Belongs to the tumor necrosis factor family. Homotrimer. The homotrimers may then dimerize and form higher-order oligomers. N-glycosylated. Post-translationally, processing by furin produces a secreted form. Not abundant; expressed in specific cell types of ectodermal (but not mesodermal) origin of keratinocytes, hair follicles, sweat glands. Also in adult heart, liver, muscle, pancreas, prostate, fetal liver, uterus, small intestine and umbilical cord.

It localises to the cell membrane. It is found in the secreted. In terms of biological role, cytokine which is involved in epithelial-mesenchymal signaling during morphogenesis of ectodermal organs. Functions as a ligand activating the DEATH-domain containing receptors EDAR and EDA2R. May also play a role in cell adhesion. Binds only to the receptor EDAR, while isoform 3 binds exclusively to the receptor EDA2R. Functionally, binds only to the receptor EDA2R. The chain is Ectodysplasin-A (EDA) from Homo sapiens (Human).